The following is a 339-amino-acid chain: SAGA complex subunit Hfi1 (339 aa).

This sequence belongs to the HFI1 family. Component of the 1.8 MDa SAGA (Spt-Ada-Gcn5 acetyltransferase) complex, which is composed of 19 subunits tra1, spt7, taf5, ngg1/ada3, sgf73, spt20, spt8, taf12, taf6, hfi1/ada1, ubp8, gcn5, ada2, spt3, sgf29, taf10, taf9, sgf11 and sus1. The SAGA complex is composed of 4 modules, namely the HAT (histone acetyltransferase) module (gcn5, ada2, ngg1/ada3 and sgf29), the DUB (deubiquitinating) module (ubp8, sgf11, sgf73 and sus1), the core or TAF (TBP-associated factor) module (taf5, taf6, taf9, taf10 and taf12), and the Tra1 or SPT (Suppressor of Ty) module (tra1, hfi1/ada1, spt3, spt7, spt8 and spt20). The Tra1/SPT module binds activators, the core module recruits TBP (TATA-binding protein), the HAT module contains the histone H3 acetyltransferase gcn5, and the DUB module comprises the histone H2B deubiquitinase ubp8.

The protein resides in the nucleus. Component of the transcription coactivator SAGA complex. SAGA acts as a general cofactor required for essentially all RNA polymerase II transcription. At the promoters, SAGA is required for transcription pre-initiation complex (PIC) recruitment. It influences RNA polymerase II transcriptional activity through different activities such as TBP interaction (via core/TAF module) and promoter selectivity, interaction with transcription activators (via Tra1/SPT module), and chromatin modification through histone acetylation (via HAT module) and deubiquitination (via DUB module). SAGA preferentially acetylates histones H3 (to form H3K9ac, H3K14ac, H3K18ac and H3K23ac) and H2B and deubiquitinates histone H2B. SAGA interacts with DNA via upstream activating sequences (UASs). In Schizosaccharomyces pombe (strain 972 / ATCC 24843) (Fission yeast), this protein is SAGA complex subunit Hfi1 (hfi1).